The sequence spans 266 residues: Probable matrix protein (266 aa).

Positions 158–177 (ACSAGTGGTEEGDSDTEEEP) are disordered. Residues 167–177 (EEGDSDTEEEP) are compositionally biased toward acidic residues.

Its subcellular location is the virion. In terms of biological role, may play a role in virion budding and release by binding the ribonucleocapsid and the host membrane. In Ixodidae (hardbacked ticks), this protein is Probable matrix protein.